We begin with the raw amino-acid sequence, 254 residues long: Type III pantothenate kinase (254 aa).

6 to 13 lines the ATP pocket; the sequence is DVGNTNTT. Residues tyrosine 100 and 107–110 each bind substrate; that span reads GADR. Aspartate 109 acts as the Proton acceptor in catalysis. Aspartate 129 contributes to the K(+) binding site. ATP is bound at residue threonine 132. Threonine 184 contributes to the substrate binding site.

This sequence belongs to the type III pantothenate kinase family. In terms of assembly, homodimer. The cofactor is NH4(+). Requires K(+) as cofactor.

It localises to the cytoplasm. It carries out the reaction (R)-pantothenate + ATP = (R)-4'-phosphopantothenate + ADP + H(+). Its pathway is cofactor biosynthesis; coenzyme A biosynthesis; CoA from (R)-pantothenate: step 1/5. In terms of biological role, catalyzes the phosphorylation of pantothenate (Pan), the first step in CoA biosynthesis. The sequence is that of Type III pantothenate kinase from Anaeromyxobacter dehalogenans (strain 2CP-1 / ATCC BAA-258).